Consider the following 350-residue polypeptide: Succinylglutamate desuccinylase (350 aa).

Positions 71, 74, and 169 each coordinate Zn(2+). Glu233 is a catalytic residue.

The protein belongs to the AspA/AstE family. Succinylglutamate desuccinylase subfamily. The cofactor is Zn(2+).

The catalysed reaction is N-succinyl-L-glutamate + H2O = L-glutamate + succinate. It participates in amino-acid degradation; L-arginine degradation via AST pathway; L-glutamate and succinate from L-arginine: step 5/5. Transforms N(2)-succinylglutamate into succinate and glutamate. The chain is Succinylglutamate desuccinylase from Pseudoalteromonas atlantica (strain T6c / ATCC BAA-1087).